A 348-amino-acid chain; its full sequence is MSGTADRLAARIERAWQDGGALQWALRPLALLMRGAVTARRALYRCGAWRTERLGVPVIVVGNRVAGGAGKTPTTLAIVAALQQAGRQPGIVSRGHGSREREARPVSADSTAQSVGDEPLLMQRRAQVPVWVGRDRVAAGRALLAAHPQVDVLVCDDGLQHLRLRRDVEVIVFDERGAGNGWLLPAGPLREPIDAPTDARQIVLYNAERPSTALPGHCARRRLAGLVELGAWWQGADARAELPPELKRQPVLASAGIGQPGRFFDSLRTLGLAIEPWPLPDHHGFDTLPWPAQTRDVIVTEKDAVKLPLQRLRAERPGLRVWVAPLLFDLPETFVSELLAALPARRPD.

Residue 65 to 72 participates in ATP binding; the sequence is VAGGAGKT. Residues 89 to 117 are disordered; sequence PGIVSRGHGSREREARPVSADSTAQSVGD.

The protein belongs to the LpxK family.

It carries out the reaction a lipid A disaccharide + ATP = a lipid IVA + ADP + H(+). Its pathway is glycolipid biosynthesis; lipid IV(A) biosynthesis; lipid IV(A) from (3R)-3-hydroxytetradecanoyl-[acyl-carrier-protein] and UDP-N-acetyl-alpha-D-glucosamine: step 6/6. In terms of biological role, transfers the gamma-phosphate of ATP to the 4'-position of a tetraacyldisaccharide 1-phosphate intermediate (termed DS-1-P) to form tetraacyldisaccharide 1,4'-bis-phosphate (lipid IVA). The protein is Tetraacyldisaccharide 4'-kinase of Leptothrix cholodnii (strain ATCC 51168 / LMG 8142 / SP-6) (Leptothrix discophora (strain SP-6)).